We begin with the raw amino-acid sequence, 295 residues long: Tyrosine recombinase XerD (295 aa).

One can recognise a Core-binding (CB) domain in the interval M1–L85. Residues K106 to T289 form the Tyr recombinase domain. Residues R146, K170, H241, R244, and H267 contribute to the active site. Y276 serves as the catalytic O-(3'-phospho-DNA)-tyrosine intermediate.

It belongs to the 'phage' integrase family. XerD subfamily. As to quaternary structure, forms a cyclic heterotetrameric complex composed of two molecules of XerC and two molecules of XerD.

The protein resides in the cytoplasm. Its function is as follows. Site-specific tyrosine recombinase, which acts by catalyzing the cutting and rejoining of the recombining DNA molecules. The XerC-XerD complex is essential to convert dimers of the bacterial chromosome into monomers to permit their segregation at cell division. It also contributes to the segregational stability of plasmids. The protein is Tyrosine recombinase XerD of Staphylococcus epidermidis (strain ATCC 35984 / DSM 28319 / BCRC 17069 / CCUG 31568 / BM 3577 / RP62A).